Here is a 95-residue protein sequence, read N- to C-terminus: Large ribosomal subunit protein bL27 (95 aa).

Positions 1–12 are excised as a propeptide; that stretch reads MLLIKKINLQFF. A disordered region spans residues 17 to 37; that stretch reads GVGSTKNGRDSNPKYLGAKKS.

The protein belongs to the bacterial ribosomal protein bL27 family. The N-terminus is cleaved by ribosomal processing cysteine protease Prp.

In Malacoplasma penetrans (strain HF-2) (Mycoplasma penetrans), this protein is Large ribosomal subunit protein bL27.